We begin with the raw amino-acid sequence, 450 residues long: Ribosomal protein uS12 methylthiotransferase RimO (450 aa).

Positions 9–124 (NRINVVTLGC…LLSALEADYK (116 aa)) constitute an MTTase N-terminal domain. Positions 18, 53, 87, 148, 152, and 155 each coordinate [4Fe-4S] cluster. The 232-residue stretch at 134 to 365 (TTPKNYAYLK…EIQSQISWEL (232 aa)) folds into the Radical SAM core domain. One can recognise a TRAM domain in the interval 367–434 (QQKIGEVFNV…DFDLYGEPLN (68 aa)).

Belongs to the methylthiotransferase family. RimO subfamily. [4Fe-4S] cluster serves as cofactor.

The protein localises to the cytoplasm. It catalyses the reaction L-aspartate(89)-[ribosomal protein uS12]-hydrogen + (sulfur carrier)-SH + AH2 + 2 S-adenosyl-L-methionine = 3-methylsulfanyl-L-aspartate(89)-[ribosomal protein uS12]-hydrogen + (sulfur carrier)-H + 5'-deoxyadenosine + L-methionine + A + S-adenosyl-L-homocysteine + 2 H(+). In terms of biological role, catalyzes the methylthiolation of an aspartic acid residue of ribosomal protein uS12. This Christiangramia forsetii (strain DSM 17595 / CGMCC 1.15422 / KT0803) (Gramella forsetii) protein is Ribosomal protein uS12 methylthiotransferase RimO.